Consider the following 522-residue polypeptide: Amine oxidase [flavin-containing] (522 aa).

Residues 1–492 lie on the Cytoplasmic side of the membrane; sequence MTANAYDVIV…WERNLPSVGG (492 aa). The residue at position 398 (Cys-398) is an S-8alpha-FAD cysteine. A helical; Anchor for type IV membrane protein transmembrane segment spans residues 493–513; it reads FLKFMGVSSFLAAATAAGLVA. The Mitochondrial intermembrane segment spans residues 514 to 522; it reads CKKGLLPRC.

The protein belongs to the flavin monoamine oxidase family. Monomer, homo- or heterodimer (containing two subunits of similar size). Each subunit contains a covalently bound flavin. Enzymatically active as monomer. FAD serves as cofactor. In terms of tissue distribution, strongest expression in brain and intestine, followed by liver, heart and gill. Little expression in spleen, eye or muscle. In brain, highest activity in noradrenergic and serotonergic cell groups and those of the habenulointerpeduncular pathway; moderate levels in dopaminergic cell clusters.

It is found in the mitochondrion outer membrane. The catalysed reaction is a secondary aliphatic amine + O2 + H2O = a primary amine + an aldehyde + H2O2. It catalyses the reaction a primary methyl amine + O2 + H2O = an aldehyde + H2O2 + NH4(+). It carries out the reaction serotonin + O2 + H2O = (5-hydroxyindol-3-yl)acetaldehyde + H2O2 + NH4(+). The enzyme catalyses 2-phenylethylamine + O2 + H2O = 2-phenylacetaldehyde + H2O2 + NH4(+). The catalysed reaction is tyramine + O2 + H2O = (4-hydroxyphenyl)acetaldehyde + H2O2 + NH4(+). It catalyses the reaction dopamine + O2 + H2O = 3,4-dihydroxyphenylacetaldehyde + H2O2 + NH4(+). It carries out the reaction (R)-adrenaline + O2 + H2O = (R)-3,4-dihydroxymandelaldehyde + methylamine + H2O2. The enzyme catalyses (R)-noradrenaline + O2 + H2O = (R)-3,4-dihydroxymandelaldehyde + H2O2 + NH4(+). The catalysed reaction is kynuramine + O2 + H2O = 3-(2-aminophenyl)-3-oxopropanal + H2O2 + NH4(+). It catalyses the reaction tryptamine + O2 + H2O = indole-3-acetaldehyde + H2O2 + NH4(+). Inhibited by both clorgyline (selective MAOA inhibitor) and deprenyl (selective MAOB inhibitor). Functionally, catalyzes the oxidative deamination of biogenic and xenobiotic amines and has important functions in the metabolism of neuroactive and vasoactive amines in the central nervous system and peripheral tissues. Preferentially oxidizes serotonin and tyramine. Also catalyzes the oxidative deamination of kynuramine to 3-(2-aminophenyl)-3-oxopropanal that can spontaneously condense to 4-hydroxyquinoline. The protein is Amine oxidase [flavin-containing] of Danio rerio (Zebrafish).